Consider the following 844-residue polypeptide: Saxiphilin (844 aa).

The first 19 residues, M1–A19, serve as a signal peptide directing secretion. A Transferrin-like 1; first part domain is found at V26–D106. Intrachain disulfides connect C29–C64, C39–C55, C110–C130, C141–C148, C150–C172, C180–C202, C222–C244, C277–C360, C322–C335, C332–C343, C388–C402, C495–C527, C505–C518, C552–C839, C570–C799, C607–C685, C641–C655, C652–C668, and C725–C739. Thyroglobulin type-1 domains are found at residues L107–C172 and L177–C244. The interval K109–L249 is absent in transferrins. In terms of domain architecture, Transferrin-like 1; second part spans Q245 to G482. One can recognise a Transferrin-like 2 domain in the interval V492–R828.

The protein belongs to the transferrin family. As to quaternary structure, monomer. Plasma. Highest levels of transcripts found in the liver, the lung, the pancreas and the brain.

It localises to the secreted. Functionally, binds specifically to the neurotoxin saxitoxin. Its physiological role may be to transport or sequester an endogenous organic molecule other than Fe(3+). It may participate in a detoxification mechanism for neutralizing a microbial toxin. This Aquarana catesbeiana (American bullfrog) protein is Saxiphilin.